A 310-amino-acid chain; its full sequence is Methionyl-tRNA formyltransferase (310 aa).

(6S)-5,6,7,8-tetrahydrofolate is bound at residue 109 to 112 (SLLP).

This sequence belongs to the Fmt family.

The enzyme catalyses L-methionyl-tRNA(fMet) + (6R)-10-formyltetrahydrofolate = N-formyl-L-methionyl-tRNA(fMet) + (6S)-5,6,7,8-tetrahydrofolate + H(+). Its function is as follows. Attaches a formyl group to the free amino group of methionyl-tRNA(fMet). The formyl group appears to play a dual role in the initiator identity of N-formylmethionyl-tRNA by promoting its recognition by IF2 and preventing the misappropriation of this tRNA by the elongation apparatus. The chain is Methionyl-tRNA formyltransferase from Alkaliphilus oremlandii (strain OhILAs) (Clostridium oremlandii (strain OhILAs)).